The primary structure comprises 198 residues: MRRLAVYLAIAVGLFAQAPKEGARESLAEKADEAGNKAHAAEEEGSMDIWKWANFLILAGGLGYLVGKNAGPFFAARSAGIRKDMENSLAQQKDAEARAADVDRRLANMEADIAALRGEGERAARAEAERMEQHTAAEIAKIQQHSEQEIASAGKAARMDLKRYAAELAVELAEQKVRARMTPETQDALVQGFVRNLK.

The helical transmembrane segment at 49–67 (IWKWANFLILAGGLGYLVG) threads the bilayer.

It belongs to the ATPase B chain family. As to quaternary structure, F-type ATPases have 2 components, F(1) - the catalytic core - and F(0) - the membrane proton channel. F(1) has five subunits: alpha(3), beta(3), gamma(1), delta(1), epsilon(1). F(0) has three main subunits: a(1), b(2) and c(10-14). The alpha and beta chains form an alternating ring which encloses part of the gamma chain. F(1) is attached to F(0) by a central stalk formed by the gamma and epsilon chains, while a peripheral stalk is formed by the delta and b chains.

It localises to the cell inner membrane. F(1)F(0) ATP synthase produces ATP from ADP in the presence of a proton or sodium gradient. F-type ATPases consist of two structural domains, F(1) containing the extramembraneous catalytic core and F(0) containing the membrane proton channel, linked together by a central stalk and a peripheral stalk. During catalysis, ATP synthesis in the catalytic domain of F(1) is coupled via a rotary mechanism of the central stalk subunits to proton translocation. In terms of biological role, component of the F(0) channel, it forms part of the peripheral stalk, linking F(1) to F(0). This Solibacter usitatus (strain Ellin6076) protein is ATP synthase subunit b.